We begin with the raw amino-acid sequence, 307 residues long: N-acetylmuramic acid 6-phosphate etherase (307 aa).

Residues valine 62–lysine 225 form the SIS domain. Glutamate 90 (proton donor) is an active-site residue. The active site involves glutamate 121.

The protein belongs to the GCKR-like family. MurNAc-6-P etherase subfamily. Homodimer.

It catalyses the reaction N-acetyl-D-muramate 6-phosphate + H2O = N-acetyl-D-glucosamine 6-phosphate + (R)-lactate. Its pathway is amino-sugar metabolism; 1,6-anhydro-N-acetylmuramate degradation. It participates in amino-sugar metabolism; N-acetylmuramate degradation. The protein operates within cell wall biogenesis; peptidoglycan recycling. Functionally, specifically catalyzes the cleavage of the D-lactyl ether substituent of MurNAc 6-phosphate, producing GlcNAc 6-phosphate and D-lactate. Together with AnmK, is also required for the utilization of anhydro-N-acetylmuramic acid (anhMurNAc) either imported from the medium or derived from its own cell wall murein, and thus plays a role in cell wall recycling. The protein is N-acetylmuramic acid 6-phosphate etherase of Brucella anthropi (strain ATCC 49188 / DSM 6882 / CCUG 24695 / JCM 21032 / LMG 3331 / NBRC 15819 / NCTC 12168 / Alc 37) (Ochrobactrum anthropi).